The sequence spans 266 residues: NADH dehydrogenase [ubiquinone] iron-sulfur protein 3, mitochondrial (266 aa).

Residues 1 to 38 (MAAAVAAAARGCWQRLVGSAAPARVAGRPSVLLLPVRR) constitute a mitochondrion transit peptide.

This sequence belongs to the complex I 30 kDa subunit family. As to quaternary structure, core subunit of respiratory chain NADH dehydrogenase (Complex I) which is composed of 45 different subunits. Interacts with NDUFAF3. Interacts with RAB5IF. Found in subcomplexes containing subunits NDUFS2, MT-ND1 and NDUFA13.

It localises to the mitochondrion inner membrane. The catalysed reaction is a ubiquinone + NADH + 5 H(+)(in) = a ubiquinol + NAD(+) + 4 H(+)(out). Functionally, core subunit of the mitochondrial membrane respiratory chain NADH dehydrogenase (Complex I) which catalyzes electron transfer from NADH through the respiratory chain, using ubiquinone as an electron acceptor. Essential for the catalytic activity and assembly of complex I. The polypeptide is NADH dehydrogenase [ubiquinone] iron-sulfur protein 3, mitochondrial (NDUFS3) (Bos taurus (Bovine)).